The primary structure comprises 267 residues: 3-deoxy-manno-octulosonate cytidylyltransferase 2 (267 aa).

Belongs to the KdsB family.

The protein resides in the cytoplasm. The enzyme catalyses 3-deoxy-alpha-D-manno-oct-2-ulosonate + CTP = CMP-3-deoxy-beta-D-manno-octulosonate + diphosphate. It functions in the pathway nucleotide-sugar biosynthesis; CMP-3-deoxy-D-manno-octulosonate biosynthesis; CMP-3-deoxy-D-manno-octulosonate from 3-deoxy-D-manno-octulosonate and CTP: step 1/1. Its pathway is bacterial outer membrane biogenesis; lipopolysaccharide biosynthesis. In terms of biological role, activates KDO (a required 8-carbon sugar) for incorporation into bacterial lipopolysaccharide in Gram-negative bacteria. This is 3-deoxy-manno-octulosonate cytidylyltransferase 2 from Burkholderia ambifaria (strain MC40-6).